The primary structure comprises 479 residues: Chromosomal replication initiator protein DnaA (479 aa).

Positions 1 to 74 (MFSGVVMAWQ…RSLTGVDSSI (74 aa)) are domain I, interacts with DnaA modulators. Residues 74–142 (ITDVRFLEKK…SVPKNNASIR (69 aa)) form a domain II region. The tract at residues 143-360 (ALHPRYTFDE…SAITAIGARA (218 aa)) is domain III, AAA+ region. Positions 187, 189, 190, and 191 each coordinate ATP. The interval 361–479 (RLMGGYIDMN…NLLSDKVKQI (119 aa)) is domain IV, binds dsDNA.

It belongs to the DnaA family. Oligomerizes as a right-handed, spiral filament on DNA at oriC.

The protein resides in the cytoplasm. In terms of biological role, plays an essential role in the initiation and regulation of chromosomal replication. ATP-DnaA binds to the origin of replication (oriC) to initiate formation of the DNA replication initiation complex once per cell cycle. Binds the DnaA box (a 9 base pair repeat at the origin) and separates the double-stranded (ds)DNA. Forms a right-handed helical filament on oriC DNA; dsDNA binds to the exterior of the filament while single-stranded (ss)DNA is stabiized in the filament's interior. The ATP-DnaA-oriC complex binds and stabilizes one strand of the AT-rich DNA unwinding element (DUE), permitting loading of DNA polymerase. After initiation quickly degrades to an ADP-DnaA complex that is not apt for DNA replication. Binds acidic phospholipids. The chain is Chromosomal replication initiator protein DnaA from Desulfotalea psychrophila (strain LSv54 / DSM 12343).